A 622-amino-acid chain; its full sequence is Cilia- and flagella-associated protein 206 (622 aa).

A disordered region spans residues 568–593 (NTSQVYPLKEASTQSKREGSSRVPRP).

The protein belongs to the CFAP206 family. In terms of tissue distribution, expressed in the sperm, oviduct, lung, nasal cavity, brain ependyma and choroid plexus.

It localises to the cytoplasm. The protein localises to the cytoskeleton. It is found in the cilium axoneme. Its subcellular location is the cilium basal body. Functionally, essential for sperm motility and is involved in the regulation of the beating frequency of motile cilia on the epithelial cells of the respiratory tract. Required for the establishment of radial spokes in sperm flagella. This is Cilia- and flagella-associated protein 206 from Mus musculus (Mouse).